The following is a 377-amino-acid chain: MTSKLLPLLLNLIFLFFFPLLNASEQKPCYSFSCSQESVVARFPFSLFSYQPESCGYSGFNLICKDDANTTLKLPKSEPFLVKEIDYETQRIRLNDPENCLARRLLNFDPSGSPFSFLRSRNYTFLICPKEANITASFRAIDCLGNTTSSFFVVQFENLGSMPSSCHIFKILPLPFSWFVAYTTYPDGQNSRDMWLKWDSPDCRDCERRTNSRCGFKNNTSHQVECFSSVNPGLHNTGLQVLKIMCLSLVGPLTALTFCVGLVMCSSERVSSQIQQAVVARLSGSVTSQPSNEVARIGLDESTIESYKKVELGESRRLPTGSNDVVCPICLSEYATKETVRCLPECEHCFHTECIDAWLKLHSSCPVCRSNPSPLRD.

An N-terminal signal peptide occupies residues 1 to 23 (MTSKLLPLLLNLIFLFFFPLLNA). The chain crosses the membrane as a helical span at residues 244-264 (IMCLSLVGPLTALTFCVGLVM). The segment at 327–369 (CPICLSEYATKETVRCLPECEHCFHTECIDAWLKLHSSCPVCR) adopts an RING-type; atypical zinc-finger fold.

This sequence belongs to the RING-type zinc finger family. ATL subfamily.

Its subcellular location is the membrane. The catalysed reaction is S-ubiquitinyl-[E2 ubiquitin-conjugating enzyme]-L-cysteine + [acceptor protein]-L-lysine = [E2 ubiquitin-conjugating enzyme]-L-cysteine + N(6)-ubiquitinyl-[acceptor protein]-L-lysine.. It participates in protein modification; protein ubiquitination. This chain is RING-H2 finger protein ATL22 (ATL22), found in Arabidopsis thaliana (Mouse-ear cress).